The primary structure comprises 603 residues: Serine palmitoyltransferase 2 (603 aa).

A helical transmembrane segment spans residues 90–107 (YYYVVATYLTYLVLIIIG). The residue at position 398 (K398) is an N6-(pyridoxal phosphate)lysine.

This sequence belongs to the class-II pyridoxal-phosphate-dependent aminotransferase family. As to quaternary structure, lcb1 and lcb2 encode essential subunits of the enzyme and form a heterodimer. The cofactor is pyridoxal 5'-phosphate.

The protein resides in the cytoplasm. It is found in the endoplasmic reticulum. It localises to the membrane. The enzyme catalyses L-serine + hexadecanoyl-CoA + H(+) = 3-oxosphinganine + CO2 + CoA. Its pathway is lipid metabolism; sphingolipid metabolism. Catalytic subunit of serine palmitoyltransferase (SPT), which catalyzes the committed step in the synthesis of sphingolipids, the condensation of serine with palmitoyl CoA to form the long chain base 3-ketosphinganine. The chain is Serine palmitoyltransferase 2 (lcb2) from Schizosaccharomyces pombe (strain 972 / ATCC 24843) (Fission yeast).